A 435-amino-acid polypeptide reads, in one-letter code: ATP-dependent protease ATPase subunit HslU (435 aa).

ATP is bound by residues I18, 60–65 (GVGKTE), D248, E313, and R385.

It belongs to the ClpX chaperone family. HslU subfamily. As to quaternary structure, a double ring-shaped homohexamer of HslV is capped on each side by a ring-shaped HslU homohexamer. The assembly of the HslU/HslV complex is dependent on binding of ATP.

The protein resides in the cytoplasm. Functionally, ATPase subunit of a proteasome-like degradation complex; this subunit has chaperone activity. The binding of ATP and its subsequent hydrolysis by HslU are essential for unfolding of protein substrates subsequently hydrolyzed by HslV. HslU recognizes the N-terminal part of its protein substrates and unfolds these before they are guided to HslV for hydrolysis. The polypeptide is ATP-dependent protease ATPase subunit HslU (Allorhizobium ampelinum (strain ATCC BAA-846 / DSM 112012 / S4) (Agrobacterium vitis (strain S4))).